The primary structure comprises 440 residues: SET domain-containing protein 4 (440 aa).

Positions 1–16 (MQKGKGRTSRIRRRKL) are enriched in basic residues. The tract at residues 1–24 (MQKGKGRTSRIRRRKLCGSSESRG) is disordered. An SET domain is found at 48-273 (SNLAPACFPG…KHEEVFICYG (226 aa)). S-adenosyl-L-methionine is bound at residue Tyr272.

Belongs to the class V-like SAM-binding methyltransferase superfamily. SETD4 family. As to quaternary structure, forms a ternary complex with TBK1 and ZNF268; the interaction with TBK1 is ZNF268-dependent and leads to TBK1 monomethylation.

It localises to the cytoplasm. It is found in the cytosol. The protein localises to the nucleus. It catalyses the reaction L-lysyl(4)-[histone H3] + S-adenosyl-L-methionine = N(6)-methyl-L-lysyl(4)-[histone H3] + S-adenosyl-L-homocysteine + H(+). The enzyme catalyses N(6)-methyl-L-lysyl(4)-[histone H3] + S-adenosyl-L-methionine = N(6),N(6)-dimethyl-L-lysyl(4)-[histone H3] + S-adenosyl-L-homocysteine + H(+). The catalysed reaction is L-lysyl(20)-[histone H4] + S-adenosyl-L-methionine = N(6)-methyl-L-lysyl(20)-[histone H4] + S-adenosyl-L-homocysteine + H(+). It carries out the reaction N(6)-methyl-L-lysyl(20)-[histone H4] + S-adenosyl-L-methionine = N(6),N(6)-dimethyl-L-lysyl(20)-[histone H4] + S-adenosyl-L-homocysteine + H(+). It catalyses the reaction N(6),N(6)-dimethyl-L-lysyl(20)-[histone H4] + S-adenosyl-L-methionine = N(6),N(6),N(6)-trimethyl-L-lysyl(20)-[histone H4] + S-adenosyl-L-homocysteine + H(+). The enzyme catalyses L-lysyl-[protein] + S-adenosyl-L-methionine = N(6)-methyl-L-lysyl-[protein] + S-adenosyl-L-homocysteine + H(+). Protein-lysine N-methyltransferase that methylates both histones and non-histone proteins. Via its catalytic activity, regulates many processes, including cell proliferation, cell differentiation, inflammatory response and apoptosis. Regulates the inflammatory response by mediating mono- and dimethylation of 'Lys-4' of histone H3 (H3K4me1 and H3K4me2, respectively), leading to activate the transcription of pro-inflammatory cytokines IL6 and TNF-alpha. Through the catalysis of TBK1 monomethylation, may regulate virus-induced interferon signaling. TBK1 monomethylation enhances its interaction with MAVS, STING and IRF3, hence promoting antiviral interferon signaling. Also involved in the regulation of stem cell quiescence by catalyzing the trimethylation of 'Lys-20' of histone H4 (H4K20me3), thereby promoting heterochromatin formation. In the brain, epigenetically controls quiescence of neural stem cells for sustaining a protected neural stem cell population and maintaining a stem cell reservoir for neurogenesis. Involved in proliferation, migration, paracrine and myogenic differentiation of bone marrow mesenchymal stem cells (BMSCs). Through the catalysis of XRCC5/Ku70 trimethylation, regulates BAX-mediated apoptosis. SETD4-catalyzed XRCC5 methylation results in XRCC5 translocation to the cytoplasm, where it interacts with BAX, sequestering it from the mitochondria, hence preventing BAX-mediated apoptosis. In Homo sapiens (Human), this protein is SET domain-containing protein 4.